Here is a 552-residue protein sequence, read N- to C-terminus: Putative transport protein YE4162 (552 aa).

6 helical membrane passes run 1 to 21 (MSAIALTVSMLALVAVLGLWI), 26 to 46 (VYGVGLGIGGVLFGGIIVGHF), 65 to 85 (FGLILFVYTIGIQVGPGFFSS), 96 to 116 (FAILMVIVGGLVTAIIHKLFA), 119 to 139 (LPIILGVFSGAVTNTPALGAA), and 158 to 178 (MGYAMAYPFGICGILLVMWLI). RCK C-terminal domains follow at residues 192–276 (EFDS…VVGE) and 279–361 (DVTL…VVGN). 6 helical membrane passes run 371–391 (MLPVFIGVGLGVLLGSIPLFI), 393–413 (GFPAALRLGLAGGPLVVALIL), 439–459 (IVLFLSVVGLKSGGDFINTLV), 464–484 (LAWIGYGAMITGIPLLTVGIL), 493–513 (YLTLCGMLAGSMTDPPALAFA), and 530–550 (VYPLAMFLRIMSPQILAVLFW).

Belongs to the AAE transporter (TC 2.A.81) family. YidE subfamily.

It is found in the cell membrane. This is Putative transport protein YE4162 from Yersinia enterocolitica serotype O:8 / biotype 1B (strain NCTC 13174 / 8081).